The chain runs to 297 residues: ClpXP adapter protein SpxH (297 aa).

It belongs to the SpxH family. As to quaternary structure, interacts with Spx.

It is found in the cytoplasm. Adapter protein required for efficient degradation of Spx by ClpXP under non-stress conditions. Interaction with Spx stabilizes Spx and exposes the C-terminus of Spx for recognition and proteolysis by ClpXP. This is ClpXP adapter protein SpxH from Bacillus thuringiensis subsp. konkukian (strain 97-27).